A 331-amino-acid chain; its full sequence is MAVRKPPITTREYWAPGHAACAGCGCATALRLATKALSEAMEEKYGDPNAFAIAHATGCMEVVSAVFPYTAWKAPWIHVAFENAAAVASGIEAAWKKLGRKGKILAIGGDGGTADIGLQALSGMLERWHNVLYLMYDNEAYMNTGIQRSSSTPYGAWTTTSPPGKYSVGEDKPKKWVALIAAAHQIPYVATASIGNPLDFVRKIKKAGKIDGPAFVQVLCTCPTGWRSPLEKGVEIARLAIETGIWPLFEIENGDIWNIKIQPPGGGAKVYKEGNRVVRIEFKKPIEEYLKLQGRFKHLFKRPEAIEELRNQVKAMWKVLGVEAILPRPEE.

Positions 21, 24, 59, and 222 each coordinate [4Fe-4S] cluster.

Heterotetramer of one alpha, one beta, one delta and one gamma chain. Requires [4Fe-4S] cluster as cofactor.

The catalysed reaction is 2 oxidized [2Fe-2S]-[ferredoxin] + pyruvate + CoA = 2 reduced [2Fe-2S]-[ferredoxin] + acetyl-CoA + CO2 + H(+). The protein is Pyruvate synthase subunit PorB (porB) of Pyrococcus furiosus (strain ATCC 43587 / DSM 3638 / JCM 8422 / Vc1).